Reading from the N-terminus, the 234-residue chain is OVARIAN TUMOR DOMAIN-containing deubiquitinating enzyme 3 (234 aa).

In terms of domain architecture, OTU spans 76-234; the sequence is YAVDRVKGDG…SGRNHYDLLR (159 aa). Residues 81–87 are cys-loop; it reads VKGDGRC. Aspartate 84 is a catalytic residue. Cysteine 87 serves as the catalytic Nucleophile. Residues 154–164 form a variable-loop region; it reads IGRHDFWGGES. Residues 224–229 form a his-loop region; that stretch reads YSGRNH. Residue histidine 229 is part of the active site.

Belongs to the peptidase C85 family.

The enzyme catalyses Thiol-dependent hydrolysis of ester, thioester, amide, peptide and isopeptide bonds formed by the C-terminal Gly of ubiquitin (a 76-residue protein attached to proteins as an intracellular targeting signal).. In terms of biological role, hydrolase that can remove conjugated ubiquitin from proteins in vitro and may therefore play an important regulatory role at the level of protein turnover by preventing degradation. Cysteine protease with a preference for 'Lys-63' over 'Lys-48' over 'Met-1' -linked ubiquitin (UB) tetramers (e.g. Ub3 and Ub4) as substrates. Also cleaves RUB-GST fusion. This Arabidopsis thaliana (Mouse-ear cress) protein is OVARIAN TUMOR DOMAIN-containing deubiquitinating enzyme 3.